The following is a 178-amino-acid chain: Ribosome maturation factor RimP (178 aa).

The protein belongs to the RimP family.

It localises to the cytoplasm. In terms of biological role, required for maturation of 30S ribosomal subunits. This is Ribosome maturation factor RimP from Streptococcus pyogenes serotype M1.